The chain runs to 1487 residues: Major viral transcription factor (1487 aa).

3 disordered regions span residues 41–295 (AAPD…LPPG), 310–370 (LAKT…AEEA), and 803–1007 (PPTR…HTPR). Over residues 66-75 (VIPPPSPTPE) the composition is skewed to pro residues. 2 stretches are compositionally biased toward low complexity: residues 165 to 193 (PSSA…SSSS) and 201 to 213 (DGAG…SSSS). A compositionally biased stretch (acidic residues) spans 214–224 (DDSDSDEGGEE). Positions 235–272 (AAKTPSAAGSPGPSSGGDRPAAGAATPKSCRSGAASPG) are enriched in low complexity. Residues 273–285 (APAPAPASAPAPS) are compositionally biased toward pro residues. 3 stretches are compositionally biased toward low complexity: residues 807–829 (SQQP…AEGS), 849–860 (PSSHSQSPQHSQ), and 867–877 (ATTATCCRATQ). Residues 878–893 (TNARSRGQQHQPQKAR) show a composition bias toward polar residues. Basic residues predominate over residues 920–929 (HGRPRGKSGK). A compositionally biased stretch (low complexity) spans 938–951 (AAQAGASASFSSSA). Positions 988-1007 (GPDRRGGFRRVPRGDCHTPR) are enriched in basic and acidic residues.

Belongs to the herpesviridae ICP4 family. Post-translationally, a long stretch of serine residues may be a major site of phosphorylation.

It localises to the host nucleus. In terms of biological role, this IE protein is a multifunctional protein capable of migrating to the nucleus, binding to DNA, trans-activating other viral genes, and autoregulating its own synthesis. This is Major viral transcription factor (IE) from Equine herpesvirus 1 (strain Ab4p) (EHV-1).